The following is a 144-amino-acid chain: MNEELQNQFMALDVYNQQVDKLKEELSNIDMMIMELIRSIESMESMKVSKEILLPLGAGAFVKAEAQNPEKIILSVGVDVLLEKDVDEVIVDFQKSVKELEETKELVNTQIQKTNQEIVKLRSELEKRAAAIEQRNAQMRPKTN.

The protein belongs to the prefoldin alpha subunit family. As to quaternary structure, heterohexamer of two alpha and four beta subunits.

Its subcellular location is the cytoplasm. In terms of biological role, molecular chaperone capable of stabilizing a range of proteins. Seems to fulfill an ATP-independent, HSP70-like function in archaeal de novo protein folding. This is Prefoldin subunit alpha from Methanococcus maripaludis (strain C7 / ATCC BAA-1331).